Reading from the N-terminus, the 653-residue chain is ATP-dependent zinc metalloprotease FtsH 1 (653 aa).

Residues 1 to 7 (MSRFFKS) are Cytoplasmic-facing. A helical transmembrane segment spans residues 8 to 28 (AAFPILIVVVLAFFAQRLINP). Residues 29-105 (GDSGPRYDYS…FDIEGTKSNG (77 aa)) lie on the Extracellular side of the membrane. Residues 106–126 (WLSLLTYVLPFLIFIGFWIFL) form a helical membrane-spanning segment. The Cytoplasmic portion of the chain corresponds to 127 to 653 (MNQVQGGGSK…MHFPERPELA (527 aa)). 198–205 (GPPGTGKT) contributes to the ATP binding site. His420 is a Zn(2+) binding site. Glu421 is an active-site residue. His424 and Asp496 together coordinate Zn(2+). The disordered stretch occupies residues 603–653 (EEVFGAEASPPPDVPLPPATERGRDTPRPLPRPGLAGGAAEMHFPERPELA). A compositionally biased stretch (pro residues) spans 611–620 (SPPPDVPLPP).

This sequence in the central section; belongs to the AAA ATPase family. It in the C-terminal section; belongs to the peptidase M41 family. In terms of assembly, homohexamer. The cofactor is Zn(2+).

It is found in the cell membrane. Functionally, acts as a processive, ATP-dependent zinc metallopeptidase for both cytoplasmic and membrane proteins. Plays a role in the quality control of integral membrane proteins. In Conexibacter woesei (strain DSM 14684 / CCUG 47730 / CIP 108061 / JCM 11494 / NBRC 100937 / ID131577), this protein is ATP-dependent zinc metalloprotease FtsH 1.